The primary structure comprises 533 residues: T-complex protein 1 subunit delta (533 aa).

A disordered region spans residues 1-26 (MSAPAAAPAKVLPSRSDFDEKEKEKD). Positions 16-26 (SDFDEKEKEKD) are enriched in basic and acidic residues.

Belongs to the TCP-1 chaperonin family. Heterooligomeric complex of about 850 to 900 kDa that forms two stacked rings, 12 to 16 nm in diameter.

The protein resides in the cytoplasm. In terms of biological role, molecular chaperone; assists the folding of proteins upon ATP hydrolysis. Known to play a role, in vitro, in the folding of actin and tubulin. This Dictyostelium discoideum (Social amoeba) protein is T-complex protein 1 subunit delta (cct4).